We begin with the raw amino-acid sequence, 472 residues long: Glutamine synthetase (472 aa).

One can recognise a GS beta-grasp domain in the interval 17–101 (YDIKFVLLRF…LRCSIYEPST (85 aa)). Positions 109-472 (PRSIAIRAEN…HPVEFEMYYA (364 aa)) constitute a GS catalytic domain. The Mg(2+) site is built by Glu-134 and Glu-136. Glu-212 provides a ligand contact to ATP. Mg(2+) contacts are provided by Glu-217 and Glu-225. L-glutamate contacts are provided by residues 269-270 (NG) and Gly-270. Residue His-274 coordinates Mg(2+). ATP contacts are provided by residues 276-278 (NMS) and Ser-278. L-glutamate is bound by residues Arg-326, Glu-332, and Arg-344. Residues Arg-344, Arg-349, and Lys-357 each contribute to the ATP site. Glu-362 is a binding site for Mg(2+). Arg-364 is an L-glutamate binding site. The residue at position 402 (Tyr-402) is an O-AMP-tyrosine.

Belongs to the glutamine synthetase family. As to quaternary structure, oligomer of 12 subunits arranged in the form of two hexameric ring. Mg(2+) serves as cofactor.

Its subcellular location is the cytoplasm. The enzyme catalyses L-glutamate + NH4(+) + ATP = L-glutamine + ADP + phosphate + H(+). With respect to regulation, the activity of this enzyme could be controlled by adenylation under conditions of abundant glutamine. Catalyzes the ATP-dependent biosynthesis of glutamine from glutamate and ammonia. The protein is Glutamine synthetase of Pasteurella multocida (strain Pm70).